Consider the following 626-residue polypeptide: DNA mismatch repair protein MutL (626 aa).

Positions 352–399 (QPPSPSFTSRPSSAGYASGSWHPAVSSPRTEWSPQTAHPAHRPLDLGA) are disordered. The segment covering 378 to 387 (SPRTEWSPQT) has biased composition (polar residues).

The protein belongs to the DNA mismatch repair MutL/HexB family.

Its function is as follows. This protein is involved in the repair of mismatches in DNA. It is required for dam-dependent methyl-directed DNA mismatch repair. May act as a 'molecular matchmaker', a protein that promotes the formation of a stable complex between two or more DNA-binding proteins in an ATP-dependent manner without itself being part of a final effector complex. The polypeptide is DNA mismatch repair protein MutL (Brucella anthropi (strain ATCC 49188 / DSM 6882 / CCUG 24695 / JCM 21032 / LMG 3331 / NBRC 15819 / NCTC 12168 / Alc 37) (Ochrobactrum anthropi)).